The chain runs to 92 residues: Large ribosomal subunit protein bL28 (92 aa).

Belongs to the bacterial ribosomal protein bL28 family.

This is Large ribosomal subunit protein bL28 from Borrelia garinii subsp. bavariensis (strain ATCC BAA-2496 / DSM 23469 / PBi) (Borreliella bavariensis).